The chain runs to 254 residues: NH(3)-dependent NAD(+) synthetase (254 aa).

32-39 (GISGGVDS) is a binding site for ATP. Residue aspartate 38 participates in Mg(2+) binding. Position 113 (arginine 113) interacts with deamido-NAD(+). Threonine 133 serves as a coordination point for ATP. Glutamate 138 is a Mg(2+) binding site. Deamido-NAD(+)-binding residues include lysine 146 and aspartate 153. ATP-binding residues include lysine 162 and serine 184. A deamido-NAD(+)-binding site is contributed by 244-245 (HK).

The protein belongs to the NAD synthetase family. In terms of assembly, homodimer.

It catalyses the reaction deamido-NAD(+) + NH4(+) + ATP = AMP + diphosphate + NAD(+) + H(+). The protein operates within cofactor biosynthesis; NAD(+) biosynthesis; NAD(+) from deamido-NAD(+) (ammonia route): step 1/1. Catalyzes the ATP-dependent amidation of deamido-NAD to form NAD. Uses ammonia as a nitrogen source. The sequence is that of NH(3)-dependent NAD(+) synthetase from Thermococcus sibiricus (strain DSM 12597 / MM 739).